The primary structure comprises 265 residues: 3-methyl-2-oxobutanoate hydroxymethyltransferase (265 aa).

Mg(2+) contacts are provided by aspartate 41 and aspartate 80. Residues 41-42 (DS), aspartate 80, and lysine 110 contribute to the 3-methyl-2-oxobutanoate site. Mg(2+) is bound at residue glutamate 112. Glutamate 179 (proton acceptor) is an active-site residue.

This sequence belongs to the PanB family. Homodecamer; pentamer of dimers. Requires Mg(2+) as cofactor.

The protein resides in the cytoplasm. The enzyme catalyses 3-methyl-2-oxobutanoate + (6R)-5,10-methylene-5,6,7,8-tetrahydrofolate + H2O = 2-dehydropantoate + (6S)-5,6,7,8-tetrahydrofolate. The protein operates within cofactor biosynthesis; (R)-pantothenate biosynthesis; (R)-pantoate from 3-methyl-2-oxobutanoate: step 1/2. In terms of biological role, catalyzes the reversible reaction in which hydroxymethyl group from 5,10-methylenetetrahydrofolate is transferred onto alpha-ketoisovalerate to form ketopantoate. This chain is 3-methyl-2-oxobutanoate hydroxymethyltransferase, found in Pseudothermotoga lettingae (strain ATCC BAA-301 / DSM 14385 / NBRC 107922 / TMO) (Thermotoga lettingae).